We begin with the raw amino-acid sequence, 349 residues long: Hydroxymethylglutaryl-CoA synthase (349 aa).

(3S)-3-hydroxy-3-methylglutaryl-CoA contacts are provided by D30 and A31. Catalysis depends on E82, which acts as the Proton donor/acceptor. Residues C114 and T155 each coordinate (3S)-3-hydroxy-3-methylglutaryl-CoA. C114 serves as the catalytic Acyl-thioester intermediate. Position 203 (R203) interacts with CoA. Positions 205 and 238 each coordinate (3S)-3-hydroxy-3-methylglutaryl-CoA. The active-site Proton donor/acceptor is the H238. K243 contacts CoA. (3S)-3-hydroxy-3-methylglutaryl-CoA contacts are provided by N270 and S300.

Belongs to the thiolase-like superfamily. Archaeal HMG-CoA synthase family. In terms of assembly, interacts with acetoacetyl-CoA thiolase that catalyzes the precedent step in the pathway and with a DUF35 protein. The acetoacetyl-CoA thiolase/HMG-CoA synthase complex channels the intermediate via a fused CoA-binding site, which allows for efficient coupling of the endergonic thiolase reaction with the exergonic HMGCS reaction.

The enzyme catalyses acetoacetyl-CoA + acetyl-CoA + H2O = (3S)-3-hydroxy-3-methylglutaryl-CoA + CoA + H(+). Its pathway is metabolic intermediate biosynthesis; (R)-mevalonate biosynthesis; (R)-mevalonate from acetyl-CoA: step 2/3. Its function is as follows. Catalyzes the condensation of acetyl-CoA with acetoacetyl-CoA to form 3-hydroxy-3-methylglutaryl-CoA (HMG-CoA). Functions in the mevalonate (MVA) pathway leading to isopentenyl diphosphate (IPP), a key precursor for the biosynthesis of isoprenoid compounds that are building blocks of archaeal membrane lipids. This chain is Hydroxymethylglutaryl-CoA synthase, found in Methanococcus maripaludis (strain C5 / ATCC BAA-1333).